A 95-amino-acid chain; its full sequence is Large ribosomal subunit protein uL23 (95 aa).

It belongs to the universal ribosomal protein uL23 family. In terms of assembly, part of the 50S ribosomal subunit. Contacts protein L29, and trigger factor when it is bound to the ribosome.

One of the early assembly proteins it binds 23S rRNA. One of the proteins that surrounds the polypeptide exit tunnel on the outside of the ribosome. Forms the main docking site for trigger factor binding to the ribosome. The polypeptide is Large ribosomal subunit protein uL23 (Bacillus licheniformis (strain ATCC 14580 / DSM 13 / JCM 2505 / CCUG 7422 / NBRC 12200 / NCIMB 9375 / NCTC 10341 / NRRL NRS-1264 / Gibson 46)).